The sequence spans 99 residues: HssA/B-like protein 42 (99 aa).

The segment at M1–S29 is disordered.

Belongs to the hssA/B family.

In Dictyostelium discoideum (Social amoeba), this protein is HssA/B-like protein 42 (hssl42).